Reading from the N-terminus, the 144-residue chain is MIALIQRVSQAKVDVNGQTVGQIGGGLLVLLGVEKEDSKEKADKLAEKVLNYRIFGDKNDKMNLNVQQTDGELLVVSQFTLAADTGRGLRPSFSKGAPPQLANELYQYFVQKCGEKVRVETGKFAENMQVSLTNDGPVTFWLKV.

Residues 136–137 carry the Gly-cisPro motif, important for rejection of L-amino acids motif; that stretch reads GP.

It belongs to the DTD family. As to quaternary structure, homodimer.

Its subcellular location is the cytoplasm. It catalyses the reaction glycyl-tRNA(Ala) + H2O = tRNA(Ala) + glycine + H(+). The enzyme catalyses a D-aminoacyl-tRNA + H2O = a tRNA + a D-alpha-amino acid + H(+). An aminoacyl-tRNA editing enzyme that deacylates mischarged D-aminoacyl-tRNAs. Also deacylates mischarged glycyl-tRNA(Ala), protecting cells against glycine mischarging by AlaRS. Acts via tRNA-based rather than protein-based catalysis; rejects L-amino acids rather than detecting D-amino acids in the active site. By recycling D-aminoacyl-tRNA to D-amino acids and free tRNA molecules, this enzyme counteracts the toxicity associated with the formation of D-aminoacyl-tRNA entities in vivo and helps enforce protein L-homochirality. The sequence is that of D-aminoacyl-tRNA deacylase from Mannheimia succiniciproducens (strain KCTC 0769BP / MBEL55E).